An 862-amino-acid polypeptide reads, in one-letter code: Leucine--tRNA ligase (862 aa).

A 'HIGH' region motif is present at residues 42 to 52 (PYPSGKIHIGH). Residues 614–618 (KMSKS) carry the 'KMSKS' region motif. Position 617 (Lys-617) interacts with ATP.

This sequence belongs to the class-I aminoacyl-tRNA synthetase family.

The protein localises to the cytoplasm. It carries out the reaction tRNA(Leu) + L-leucine + ATP = L-leucyl-tRNA(Leu) + AMP + diphosphate. The chain is Leucine--tRNA ligase from Syntrophus aciditrophicus (strain SB).